Reading from the N-terminus, the 565-residue chain is Arginine--tRNA ligase (565 aa).

A 'HIGH' region motif is present at residues 121–131 (PNIAKPMGMGH).

The protein belongs to the class-I aminoacyl-tRNA synthetase family. In terms of assembly, monomer.

It localises to the cytoplasm. It catalyses the reaction tRNA(Arg) + L-arginine + ATP = L-arginyl-tRNA(Arg) + AMP + diphosphate. The chain is Arginine--tRNA ligase from Lactobacillus delbrueckii subsp. bulgaricus (strain ATCC BAA-365 / Lb-18).